Here is a 354-residue protein sequence, read N- to C-terminus: DNA integrity scanning protein DisA (354 aa).

The 139-residue stretch at Glu-6–Ser-144 folds into the DAC domain. ATP is bound by residues Gly-73, Leu-91, and Thr-104 to Thr-108.

It belongs to the DisA family. Homooctamer. Requires Mg(2+) as cofactor.

The catalysed reaction is 2 ATP = 3',3'-c-di-AMP + 2 diphosphate. Functionally, participates in a DNA-damage check-point that is active prior to asymmetric division when DNA is damaged. DisA forms globular foci that rapidly scan along the chromosomes during sporulation, searching for lesions. When a lesion is present, DisA pauses at the lesion site. This triggers a cellular response that culminates in a temporary block in sporulation initiation. In terms of biological role, also has diadenylate cyclase activity, catalyzing the condensation of 2 ATP molecules into cyclic di-AMP (c-di-AMP). c-di-AMP acts as a signaling molecule that couples DNA integrity with progression of sporulation. The rise in c-di-AMP level generated by DisA while scanning the chromosome, operates as a positive signal that advances sporulation; upon encountering a lesion, the DisA focus arrests at the damaged site and halts c-di-AMP synthesis. In Clostridium kluyveri (strain ATCC 8527 / DSM 555 / NBRC 12016 / NCIMB 10680 / K1), this protein is DNA integrity scanning protein DisA.